The sequence spans 280 residues: Aspartate/glutamate leucyltransferase (280 aa).

It belongs to the R-transferase family. Bpt subfamily.

The protein localises to the cytoplasm. It catalyses the reaction N-terminal L-glutamyl-[protein] + L-leucyl-tRNA(Leu) = N-terminal L-leucyl-L-glutamyl-[protein] + tRNA(Leu) + H(+). The enzyme catalyses N-terminal L-aspartyl-[protein] + L-leucyl-tRNA(Leu) = N-terminal L-leucyl-L-aspartyl-[protein] + tRNA(Leu) + H(+). In terms of biological role, functions in the N-end rule pathway of protein degradation where it conjugates Leu from its aminoacyl-tRNA to the N-termini of proteins containing an N-terminal aspartate or glutamate. The protein is Aspartate/glutamate leucyltransferase of Cereibacter sphaeroides (strain ATCC 17023 / DSM 158 / JCM 6121 / CCUG 31486 / LMG 2827 / NBRC 12203 / NCIMB 8253 / ATH 2.4.1.) (Rhodobacter sphaeroides).